A 98-amino-acid polypeptide reads, in one-letter code: Small ribosomal subunit protein uS19 (98 aa).

The disordered stretch occupies residues 74–98 (FAPTRNYRGHAGGKSEKGGSAPRKK).

This sequence belongs to the universal ribosomal protein uS19 family.

In terms of biological role, protein S19 forms a complex with S13 that binds strongly to the 16S ribosomal RNA. The chain is Small ribosomal subunit protein uS19 from Chlorobium chlorochromatii (strain CaD3).